Reading from the N-terminus, the 434-residue chain is Adenylosuccinate synthetase (434 aa).

GTP contacts are provided by residues 15-21 (GDEGKGK) and 43-45 (GHT). The active-site Proton acceptor is D16. D16 and G43 together coordinate Mg(2+). Residues 16-19 (DEGK), 41-44 (NAGH), T133, R147, Q228, T243, and R307 contribute to the IMP site. H44 (proton donor) is an active-site residue. Position 303-309 (303-309 (SVTGRAR)) interacts with substrate. GTP is bound by residues R309, 335-337 (KLD), and 418-420 (STG).

Belongs to the adenylosuccinate synthetase family. In terms of assembly, homodimer. Requires Mg(2+) as cofactor.

Its subcellular location is the cytoplasm. The enzyme catalyses IMP + L-aspartate + GTP = N(6)-(1,2-dicarboxyethyl)-AMP + GDP + phosphate + 2 H(+). Its pathway is purine metabolism; AMP biosynthesis via de novo pathway; AMP from IMP: step 1/2. Its function is as follows. Plays an important role in the de novo pathway of purine nucleotide biosynthesis. Catalyzes the first committed step in the biosynthesis of AMP from IMP. This Neisseria meningitidis serogroup C / serotype 2a (strain ATCC 700532 / DSM 15464 / FAM18) protein is Adenylosuccinate synthetase.